We begin with the raw amino-acid sequence, 144 residues long: Large ribosomal subunit protein uL15 (144 aa).

The disordered stretch occupies residues methionine 1–glycine 52. Positions arginine 21–cysteine 31 are enriched in gly residues.

It belongs to the universal ribosomal protein uL15 family. In terms of assembly, part of the 50S ribosomal subunit.

Binds to the 23S rRNA. The chain is Large ribosomal subunit protein uL15 from Nitrosococcus oceani (strain ATCC 19707 / BCRC 17464 / JCM 30415 / NCIMB 11848 / C-107).